Consider the following 70-residue polypeptide: uncharacterized protein (70 aa).

This is an uncharacterized protein from Dictyostelium discoideum (Social amoeba).